Reading from the N-terminus, the 450-residue chain is Ribulose bisphosphate carboxylase large chain (450 aa).

K4 carries the N6,N6,N6-trimethyllysine modification. Substrate contacts are provided by N113 and T163. K165 serves as the catalytic Proton acceptor. Residue K167 participates in substrate binding. Residues K191, D193, and E194 each contribute to the Mg(2+) site. N6-carboxylysine is present on K191. The Proton acceptor role is filled by H284. Substrate contacts are provided by R285, H317, and S369.

This sequence belongs to the RuBisCO large chain family. Type I subfamily. In terms of assembly, heterohexadecamer of 8 large chains and 8 small chains; disulfide-linked. The disulfide link is formed within the large subunit homodimers. Mg(2+) is required as a cofactor. The disulfide bond which can form in the large chain dimeric partners within the hexadecamer appears to be associated with oxidative stress and protein turnover.

The protein localises to the plastid. It localises to the chloroplast. The catalysed reaction is 2 (2R)-3-phosphoglycerate + 2 H(+) = D-ribulose 1,5-bisphosphate + CO2 + H2O. It catalyses the reaction D-ribulose 1,5-bisphosphate + O2 = 2-phosphoglycolate + (2R)-3-phosphoglycerate + 2 H(+). Functionally, ruBisCO catalyzes two reactions: the carboxylation of D-ribulose 1,5-bisphosphate, the primary event in carbon dioxide fixation, as well as the oxidative fragmentation of the pentose substrate in the photorespiration process. Both reactions occur simultaneously and in competition at the same active site. This chain is Ribulose bisphosphate carboxylase large chain, found in Crassula rupestris subsp. marnieriana (Pygmyweed).